Consider the following 308-residue polypeptide: Oxygen-dependent coproporphyrinogen-III oxidase (308 aa).

S100 is a binding site for substrate. A divalent metal cation is bound by residues H104 and H114. H114 acts as the Proton donor in catalysis. Substrate is bound at residue 116-118 (NFR). The a divalent metal cation site is built by H153 and H183. Residues 248–283 (YVEFNLVFDRGTIFGLQSGGRTESILSSMPPMATWK) are important for dimerization. 266–268 (GGR) contacts substrate.

This sequence belongs to the aerobic coproporphyrinogen-III oxidase family. As to quaternary structure, homodimer. A divalent metal cation is required as a cofactor.

Its subcellular location is the cytoplasm. It carries out the reaction coproporphyrinogen III + O2 + 2 H(+) = protoporphyrinogen IX + 2 CO2 + 2 H2O. It functions in the pathway porphyrin-containing compound metabolism; protoporphyrin-IX biosynthesis; protoporphyrinogen-IX from coproporphyrinogen-III (O2 route): step 1/1. In terms of biological role, involved in the heme biosynthesis. Catalyzes the aerobic oxidative decarboxylation of propionate groups of rings A and B of coproporphyrinogen-III to yield the vinyl groups in protoporphyrinogen-IX. This Francisella tularensis subsp. holarctica (strain LVS) protein is Oxygen-dependent coproporphyrinogen-III oxidase.